A 144-amino-acid chain; its full sequence is Large ribosomal subunit protein uL15 (144 aa).

The segment at 1–58 (MRLNTLSPAAGSKPSKKRVGRGIGSGLGKTGGRGHKGQKSRSGGSVRPGFEGGQMPLK) is disordered. Over residues 21 to 31 (RGIGSGLGKTG) the composition is skewed to gly residues.

Belongs to the universal ribosomal protein uL15 family. In terms of assembly, part of the 50S ribosomal subunit.

Functionally, binds to the 23S rRNA. The protein is Large ribosomal subunit protein uL15 of Vibrio atlanticus (strain LGP32) (Vibrio splendidus (strain Mel32)).